A 420-amino-acid polypeptide reads, in one-letter code: Acetyl-CoA acetyltransferase B, mitochondrial (420 aa).

A mitochondrion-targeting transit peptide spans 1-33; the sequence is MAFCGPRTAARLSHSTRALHYTHRSFASPRTLN. C119 functions as the Acyl-thioester intermediate in the catalytic mechanism. Residues Y212, 251–253, and K256 each bind CoA; that span reads RVD. Y212 serves as a coordination point for K(+). K(+) is bound by residues A273 and A274. Residue S277 participates in CoA binding. V374 provides a ligand contact to K(+). C406 serves as the catalytic Proton donor/acceptor.

This sequence belongs to the thiolase-like superfamily. Thiolase family. In terms of assembly, homotetramer.

It is found in the mitochondrion. It catalyses the reaction 2 acetyl-CoA = acetoacetyl-CoA + CoA. The enzyme catalyses propanoyl-CoA + acetyl-CoA = 2-methyl-3-oxobutanoyl-CoA + CoA. It participates in lipid metabolism; fatty acid beta-oxidation. Its function is as follows. This is one of the enzymes that catalyzes the last step of the mitochondrial beta-oxidation pathway, an aerobic process breaking down fatty acids into acetyl-CoA. Using free coenzyme A/CoA, catalyzes the thiolytic cleavage of medium- to long-chain 3-oxoacyl-CoAs into acetyl-CoA and a fatty acyl-CoA shortened by two carbon atoms. The activity of the enzyme is reversible and it can also catalyze the condensation of two acetyl-CoA molecules into acetoacetyl-CoA. Thereby, it plays a major role in ketone body metabolism. The protein is Acetyl-CoA acetyltransferase B, mitochondrial (acat1-b) of Xenopus laevis (African clawed frog).